The following is a 323-amino-acid chain: tRNA dimethylallyltransferase (323 aa).

12 to 19 (GPTAAGKT) contacts ATP. 14 to 19 (TAAGKT) is a substrate binding site. 2 interaction with substrate tRNA regions span residues 37–40 (DSAL) and 161–165 (QRLMR).

The protein belongs to the IPP transferase family. As to quaternary structure, monomer. Mg(2+) serves as cofactor.

It catalyses the reaction adenosine(37) in tRNA + dimethylallyl diphosphate = N(6)-dimethylallyladenosine(37) in tRNA + diphosphate. Functionally, catalyzes the transfer of a dimethylallyl group onto the adenine at position 37 in tRNAs that read codons beginning with uridine, leading to the formation of N6-(dimethylallyl)adenosine (i(6)A). In Pseudomonas aeruginosa (strain UCBPP-PA14), this protein is tRNA dimethylallyltransferase.